The primary structure comprises 164 residues: Thiol peroxidase (164 aa).

A Thioredoxin domain is found at 18-163; sequence INEGDFAPDF…FDAALAAYKN (146 aa). The active-site Cysteine sulfenic acid (-SOH) intermediate is cysteine 60. A disulfide bridge connects residues cysteine 60 and cysteine 93.

Belongs to the peroxiredoxin family. Tpx subfamily. In terms of assembly, homodimer.

It carries out the reaction a hydroperoxide + [thioredoxin]-dithiol = an alcohol + [thioredoxin]-disulfide + H2O. Its function is as follows. Thiol-specific peroxidase that catalyzes the reduction of hydrogen peroxide and organic hydroperoxides to water and alcohols, respectively. Plays a role in cell protection against oxidative stress by detoxifying peroxides. This chain is Thiol peroxidase, found in Staphylococcus aureus (strain Mu50 / ATCC 700699).